We begin with the raw amino-acid sequence, 444 residues long: uncharacterized protein (444 aa).

In terms of domain architecture, Radical SAM core spans 164-381 (GAYGKSFLLE…EKALKKEGIR (218 aa)). Residues Cys178, Cys182, and Cys185 each contribute to the [4Fe-4S] cluster site.

It depends on [4Fe-4S] cluster as a cofactor.

This is an uncharacterized protein from Methanocaldococcus jannaschii (strain ATCC 43067 / DSM 2661 / JAL-1 / JCM 10045 / NBRC 100440) (Methanococcus jannaschii).